The primary structure comprises 483 residues: Endoplasmic reticulum lectin 1 (483 aa).

Positions 1 to 33 (MEEGGGGVRSLVPGGPVLLVLCGLLEASGGGRA) are cleaved as a signal peptide. MRH domains follow at residues 111-246 (SSCS…LCSH) and 342-469 (SYCF…ICKI). Cys113 and Cys126 are joined by a disulfide. Asn195 is a glycosylation site (N-linked (GlcNAc...) asparagine). Disulfide bonds link Cys199/Cys232, Cys215/Cys244, Cys344/Cys357, Cys421/Cys455, and Cys436/Cys467.

May form a complex with OS9, HSPA5, SYVN1, and SEL1L with which it interacts directly. Interacts (via PRKCSH 2 domain) with KREMEN2 (when glycosylated). Interacts with HSPA5. Isoform 1 and isoform 2 are N-glycosylated.

The protein resides in the endoplasmic reticulum lumen. In terms of biological role, probable lectin that binds selectively to improperly folded lumenal proteins. May function in endoplasmic reticulum quality control and endoplasmic reticulum-associated degradation (ERAD) of both non-glycosylated proteins and glycoproteins. The chain is Endoplasmic reticulum lectin 1 (ERLEC1) from Homo sapiens (Human).